The chain runs to 1238 residues: Inner capsid protein VP2 (1238 aa).

Positions 1–35 (MSTSAKKTPESKTEDKIEPVIEQTSNDKPEPPPNK) are disordered. Basic and acidic residues predominate over residues 7–30 (KTPESKTEDKIEPVIEQTSNDKPE).

It belongs to the turreted BTV-fold inner capsid family. As to quaternary structure, homodecamer; each decamer is made up of two conformers of VP2, called VP2A and VP2B. 12 homodecamers assemble to form an icosahedral capsid.

Its subcellular location is the virion. In terms of biological role, inner capsid protein that self-assembles to form an icosahedral capsid with a T=2 symmetry, which consists of 120 copies of VP2, with channels at each of its five-fold vertices. This capsid constitutes the innermost concentric layer of the viral mature particle. This chain is Inner capsid protein VP2 (S2), found in Cryphonectria parasitica (Chestnut blight fungus).